A 567-amino-acid polypeptide reads, in one-letter code: Geranylgeranyl transferase type-2 subunit alpha (567 aa).

PFTA repeat units follow at residues 44–78, 88–122, 124–158, 159–193, 207–241, and 363–397; these read LDES…RLEV, LVKA…RLPE, NWAR…QAAV, PPAE…QLHP, VLLK…RADP, and VLQS…ALDP. The residue at position 98 (serine 98) is a Phosphoserine. LRR repeat units lie at residues 442–463, 464–486, 487–508, 509–530, and 534–555; these read DVRV…EQLL, LVTH…AALR, CLEV…TNLP, RLQE…QPLA, and RLVL…SEHL.

The protein belongs to the protein prenyltransferase subunit alpha family. In terms of assembly, heterotrimer composed of RABGGTA, RABGGTB and CHM; within this trimer, RABGGTA and RABGGTB form the catalytic component B, while CHM (component A) mediates peptide substrate binding. The Rab GGTase dimer (RGGT) interacts with CHM (component A) prior to Rab protein binding; the association is stabilized by geranylgeranyl pyrophosphate (GGpp). The CHM:RGGT:Rab complex is destabilized by GGpp. Interacts with non-phosphorylated form of RAB8A; phosphorylation of RAB8A disrupts this interaction.

The enzyme catalyses geranylgeranyl diphosphate + L-cysteinyl-[protein] = S-geranylgeranyl-L-cysteinyl-[protein] + diphosphate. With respect to regulation, the enzymatic reaction requires the aid of a Rab escort protein (also called component A), such as CHM. Its function is as follows. Catalyzes the transfer of a geranylgeranyl moiety from geranylgeranyl diphosphate to both cysteines of Rab proteins with the C-terminal sequence -XXCC, -XCXC and -CCXX, such as RAB1A, RAB3A, RAB5A and RAB7A. This is Geranylgeranyl transferase type-2 subunit alpha (RABGGTA) from Sus scrofa (Pig).